The sequence spans 527 residues: Glucose-6-phosphate isomerase (527 aa).

E323 functions as the Proton donor in the catalytic mechanism. Residues H352 and K454 contribute to the active site.

The protein belongs to the GPI family.

Its subcellular location is the cytoplasm. The enzyme catalyses alpha-D-glucose 6-phosphate = beta-D-fructose 6-phosphate. The protein operates within carbohydrate biosynthesis; gluconeogenesis. It participates in carbohydrate degradation; glycolysis; D-glyceraldehyde 3-phosphate and glycerone phosphate from D-glucose: step 2/4. In terms of biological role, catalyzes the reversible isomerization of glucose-6-phosphate to fructose-6-phosphate. In Prochlorococcus marinus (strain MIT 9301), this protein is Glucose-6-phosphate isomerase.